Here is a 252-residue protein sequence, read N- to C-terminus: 5-oxoprolinase subunit A (252 aa).

The protein belongs to the LamB/PxpA family. As to quaternary structure, forms a complex composed of PxpA, PxpB and PxpC.

The enzyme catalyses 5-oxo-L-proline + ATP + 2 H2O = L-glutamate + ADP + phosphate + H(+). Catalyzes the cleavage of 5-oxoproline to form L-glutamate coupled to the hydrolysis of ATP to ADP and inorganic phosphate. This Staphylococcus epidermidis (strain ATCC 35984 / DSM 28319 / BCRC 17069 / CCUG 31568 / BM 3577 / RP62A) protein is 5-oxoprolinase subunit A.